The sequence spans 126 residues: MKHLLLLTLSALLYCWVSADTRCHSCYKVPVLGCVDRQSCRLEPGHKCLTTNVYLGKMWVFSNLRCGTPEEPCREVFNETNHKLGLNYNTTCCDKDNCNSPAPRPTPALALISLTSLAGLGLWLLH.

Residues 1–19 (MKHLLLLTLSALLYCWVSA) form the signal peptide. The region spanning 21 to 112 (TRCHSCYKVP…PRPTPALALI (92 aa)) is the UPAR/Ly6 domain. 3 disulfides stabilise this stretch: cysteine 23–cysteine 48, cysteine 26–cysteine 34, and cysteine 40–cysteine 66. A glycan (N-linked (GlcNAc...) (high mannose) asparagine) is linked at asparagine 89. Cysteine 93 and cysteine 98 are disulfide-bonded. Residue serine 100 is the site of GPI-anchor amidated serine attachment. Positions 101–126 (PAPRPTPALALISLTSLAGLGLWLLH) are cleaved as a propeptide — removed in mature form.

As to quaternary structure, monomer. Post-translationally, N-glycosylated. Highly expressed at the leading edges of cells, on filopodia.

It localises to the cell membrane. This chain is Lymphocyte antigen 6 complex locus protein G6c (Ly6g6c), found in Mus musculus (Mouse).